The chain runs to 80 residues: Lantibiotic Flvalpha.a (80 aa).

The propeptide at 1-38 (MNKNPIYRSEEEAKDIACGNVAAELDENSQALDAINGA) is cleaved by FlvT. 2 positions are modified to 2,3-didehydrobutyrine; by FlvM1: Thr-43 and Thr-47. The segment at residues 52-55 (TVGC) is a cross-link (beta-methyllanthionine (Thr-Cys); by FlvM1). Residues 58–68 (SYGLGNGGYCC) constitute a cross-link (lanthionine (Ser-Cys); by FlvM1). 2 cross-links (beta-methyllanthionine (Thr-Cys); by FlvM1) span residues 69-74 (TYTVEC) and 71-78 (TVECSKTC).

Post-translationally, the lanthionine formed by Ser-58 and Cys-68 forms a putative lipid II binding motif. Maturation of FlvA1 peptides involves the enzymatic conversion of Thr, and Ser into dehydrated AA and the formation of thioether bonds with cysteines. Modifications are processed by the flavecin synthetase FlvM1. This is followed by membrane translocation and cleavage of the modified precursor. In terms of processing, contains DL-lanthionine and DL-beta-methyllanthionine, when coepressed in E.coli with the flavecin synthetase FlvM1.

The protein localises to the secreted. Its function is as follows. Lanthionine-containing peptide antibiotic (lantibiotic) only active on Gram-positive bacteria in synergy with Flvbeta peptides, which are encoded by the same operon than Flvalpha.a. Shows antibacterial activity in synergy with Flvbeta.b, Flvbeta.c, Flvbeta.e and Flvbeta.g. Does not show antibacterial activity when tested with Flvbeta.a, Flvbeta.d, Flvbeta.f and Flvbeta.h. The bactericidal activity of lantibiotics is based on depolarization of energized bacterial cytoplasmic membranes, initiated by the formation of aqueous transmembrane pores. The sequence is that of Lantibiotic Flvalpha.a from Ruminococcus flavefaciens.